The sequence spans 616 residues: Glycogenin-1 (616 aa).

3 residues coordinate UDP: L10, Y16, and R95. Residues L10, Y16, R95, K104, D120, D122, N158, S159, D185, D188, and Q189 each coordinate UDP-alpha-D-glucose. Positions 120 and 122 each coordinate UDP. Residues D120 and D122 each contribute to the Mn(2+) site. Residue Y230 is glycosylated (O-linked (Glc...) tyrosine). UDP is bound by residues H247, G250, and K253. H247 contributes to the Mn(2+) binding site. Positions 250 and 253 each coordinate UDP-alpha-D-glucose. Over residues 283–302 (HQLNNEVSKPKISDSDKTET) the composition is skewed to basic and acidic residues. 3 disordered regions span residues 283 to 320 (HQLN…PTTN), 335 to 354 (NQNA…NPVP), and 371 to 516 (TNQP…SVDD). Residues 377–386 (ESREYSKEND) are compositionally biased toward basic and acidic residues. Residues 400 to 419 (SPPNSTQEPNSSYSVVSTQA) show a composition bias toward polar residues. The segment covering 450-461 (STAASSNNNVSN) has biased composition (low complexity). Composition is skewed to polar residues over residues 462-485 (QPDN…PSNP) and 492-503 (DNIQKPSVSTND). A glycan (O-linked (Glc...) tyrosine) is linked at Y598.

It belongs to the glycosyltransferase 8 family. Glycogenin subfamily. Requires Mn(2+) as cofactor.

Its subcellular location is the cytoplasm. The protein resides in the vacuole. It catalyses the reaction L-tyrosyl-[glycogenin] + UDP-alpha-D-glucose = alpha-D-glucosyl-L-tyrosyl-[glycogenin] + UDP + H(+). The enzyme catalyses [1,4-alpha-D-glucosyl](n)-L-tyrosyl-[glycogenin] + UDP-alpha-D-glucose = [1,4-alpha-D-glucosyl](n+1)-L-tyrosyl-[glycogenin] + UDP + H(+). Its function is as follows. Self-glucosylating initiator of glycogen synthesis. It catalyzes the formation of a short alpha (1,4)-glucosyl chain covalently attached via a glucose 1-O-tyrosyl linkage to internal tyrosine residues and these chains act as primers for the elongation reaction catalyzed by glycogen synthase. Capable of transferring glucosyl residues to unbound acceptors such as free oligoglucans or oligoglucan derivatives. This Saccharomyces cerevisiae (strain YJM789) (Baker's yeast) protein is Glycogenin-1 (GLG1).